The primary structure comprises 878 residues: Aconitate hydratase A (878 aa).

[4Fe-4S] cluster is bound by residues cysteine 426, cysteine 492, and cysteine 495.

Belongs to the aconitase/IPM isomerase family. Monomer. The cofactor is [4Fe-4S] cluster.

The catalysed reaction is citrate = D-threo-isocitrate. It carries out the reaction (2S,3R)-3-hydroxybutane-1,2,3-tricarboxylate = 2-methyl-cis-aconitate + H2O. The protein operates within carbohydrate metabolism; tricarboxylic acid cycle; isocitrate from oxaloacetate: step 2/2. Its pathway is organic acid metabolism; propanoate degradation. Involved in the catabolism of short chain fatty acids (SCFA) via the tricarboxylic acid (TCA)(acetyl degradation route) and probably the 2-methylcitrate cycle I (propionate degradation route). Catalyzes the reversible isomerization of citrate to isocitrate via cis-aconitate. Could catalyze the hydration of 2-methyl-cis-aconitate to yield (2R,3S)-2-methylisocitrate. The apo form of AcnA functions as a RNA-binding regulatory protein. The protein is Aconitate hydratase A (acnA) of Rickettsia conorii (strain ATCC VR-613 / Malish 7).